Consider the following 865-residue polypeptide: Carbohydrate-responsive element-binding protein (865 aa).

Disordered stretches follow at residues 15 to 41 (PRVV…AGGL) and 53 to 77 (MVSS…LADF). Residues serine 20, serine 23, and serine 25 each carry the phosphoserine modification. Threonine 27 is subject to Phosphothreonine. Serine 196 is modified (phosphoserine). 2 disordered regions span residues 334–392 (GILG…TKMP) and 500–653 (QPRC…LSRG). The span at 351-368 (GMTPLSGNTRLQARNSCS) shows a compositional bias: polar residues. Residues 515–533 (ASPPTLTSATASPTATATA) are compositionally biased toward low complexity. Serine 568 carries the post-translational modification Phosphoserine; by AMPK. Residues 583–597 (PPIPAPTPPRPPPGP) are compositionally biased toward pro residues. Residues serine 615, serine 627, and serine 644 each carry the phosphoserine modification. In terms of domain architecture, bHLH spans 662 to 716 (NRRITHISAEQKRRFNIKLGFDTLHGLVSTLSAQPSLKVSKATTLQKTAEYILML). The interval 716–737 (LQQERAAMQEEAQQLRDEIEEL) is leucine-zipper.

As to quaternary structure, binds DNA as a heterodimer with TCFL4/MLX. Phosphorylation at Ser-568 by AMPK inactivates the DNA-binding activity.

The protein localises to the nucleus. In terms of biological role, transcriptional repressor. Binds to the canonical and non-canonical E box sequences 5'-CACGTG-3'. The sequence is that of Carbohydrate-responsive element-binding protein (Mlxipl) from Rattus norvegicus (Rat).